Consider the following 464-residue polypeptide: Vitamin D3 hydroxylase-associated protein (464 aa).

Active-site charge relay system residues include lysine 150 and serine 225. Serine 249 acts as the Acyl-ester intermediate in catalysis.

The protein belongs to the amidase family. In terms of tissue distribution, kidney.

The protein resides in the mitochondrion inner membrane. Functionally, may have a vitamin D3 hydroxylase regulatory function. The chain is Vitamin D3 hydroxylase-associated protein from Gallus gallus (Chicken).